The following is a 492-amino-acid chain: 2,3-bisphosphoglycerate-independent phosphoglycerate mutase (492 aa).

Residues aspartate 11 and serine 61 each contribute to the Mn(2+) site. Serine 61 (phosphoserine intermediate) is an active-site residue. Substrate-binding positions include histidine 118, 147–148 (RD), arginine 177, arginine 183, 248–251 (RSDR), and lysine 321. Residues aspartate 387, histidine 391, aspartate 428, histidine 429, and histidine 446 each coordinate Mn(2+).

This sequence belongs to the BPG-independent phosphoglycerate mutase family. Monomer. Requires Mn(2+) as cofactor.

The enzyme catalyses (2R)-2-phosphoglycerate = (2R)-3-phosphoglycerate. It participates in carbohydrate degradation; glycolysis; pyruvate from D-glyceraldehyde 3-phosphate: step 3/5. Catalyzes the interconversion of 2-phosphoglycerate and 3-phosphoglycerate. The polypeptide is 2,3-bisphosphoglycerate-independent phosphoglycerate mutase (Wolinella succinogenes (strain ATCC 29543 / DSM 1740 / CCUG 13145 / JCM 31913 / LMG 7466 / NCTC 11488 / FDC 602W) (Vibrio succinogenes)).